The sequence spans 878 residues: Lon protease 2 (878 aa).

One can recognise a Lon N-terminal domain in the interval 85 to 281; sequence LYLLPVKERP…KVLSLFKHEI (197 aa). 434 to 441 contributes to the ATP binding site; that stretch reads GPPGVGKT. Residues 668-850 enclose the Lon proteolytic domain; that stretch reads NQQMGTVTGL…DDVAKLTFHI (183 aa). Active-site residues include Ser756 and Lys799.

The protein belongs to the peptidase S16 family. Homohexamer. Organized in a ring with a central cavity.

The protein localises to the cytoplasm. It carries out the reaction Hydrolysis of proteins in presence of ATP.. ATP-dependent serine protease that mediates the selective degradation of mutant and abnormal proteins as well as certain short-lived regulatory proteins. Required for cellular homeostasis and for survival from DNA damage and developmental changes induced by stress. Degrades polypeptides processively to yield small peptide fragments that are 5 to 10 amino acids long. Binds to DNA in a double-stranded, site-specific manner. This Hydrogenovibrio crunogenus (strain DSM 25203 / XCL-2) (Thiomicrospira crunogena) protein is Lon protease 2.